A 908-amino-acid chain; its full sequence is Low affinity vacuolar monovalent cation/H(+) antiporter (908 aa).

The segment covering 1–15 (MAKNNHISASGNSTS) has biased composition (polar residues). Positions 1 to 20 (MAKNNHISASGNSTSGDHRL) are disordered. At 1–244 (MAKNNHISAS…WEVTCSNVLW (244 aa)) the chain is on the cytoplasmic side. A Phosphothreonine modification is found at Thr-26. A Phosphoserine modification is found at Ser-32. Position 33 is a phosphothreonine (Thr-33). A disordered region spans residues 68–147 (NKSKRSVSSQ…DDEDANDDSR (80 aa)). Over residues 73-87 (SVSSQSPIVHSSNNT) the composition is skewed to low complexity. Positions 102 to 121 (ESLSSKSHSVPDLNTATPSS) are enriched in polar residues. At Ser-110 the chain carries Phosphoserine. Thr-118 bears the Phosphothreonine mark. Residue Ser-121 is modified to Phosphoserine. A helical transmembrane segment spans residues 245 to 265 (FILFGFPIAILFYSAAIVVFL). The Vacuolar segment spans residues 266–408 (LGGGGLVTNS…GRVLFYTIFH (143 aa)). Asn-361 carries an N-linked (GlcNAc...) asparagine glycan. A helical membrane pass occupies residues 409-429 (LVLQPILAVLSLCLWLLVFTI). The Cytoplasmic segment spans residues 430-494 (PMSNVLWQIM…HYYKYTVDGT (65 aa)). A helical membrane pass occupies residues 495–515 (NVIVVNLISIVFFTIFDFYVL). The Vacuolar portion of the chain corresponds to 516–530 (KNFLHWKTWFTYESS). Residues 531–551 (IFILCLTSTIPLAFYIGQAVA) traverse the membrane as a helical segment. Over 552–560 (SISAQTSMG) the chain is Cytoplasmic. The helical transmembrane segment at 561–581 (VGAVINAFFSTIVEIFLYCVA) threads the bilayer. Residues 582–587 (LQQKKG) lie on the Vacuolar side of the membrane. The chain crosses the membrane as a helical span at residues 588 to 608 (LLVEGSMIGSILGAVLLLPGL). Topologically, residues 609–626 (SMCGGALNRKTQRYNPAS) are cytoplasmic. The helical transmembrane segment at 627–647 (AGVSSALLIFSMIVMFVPTVL) threads the bilayer. The Vacuolar portion of the chain corresponds to 648-686 (YEIYGGYSVNCADGANDRDCTFSHPPLKFNRLFTHVIQP). Residues 687–707 (MSISCAIVLFCAYIIGLWFTL) form a helical membrane-spanning segment. Topologically, residues 708–746 (RTHAKMIWQLPIADPTSTAPEQQEQNSHDAPNWSRSKST) are cytoplasmic. Residues 747–767 (CILLMSTLLYAIIAEILVSCV) traverse the membrane as a helical segment. Residues 768-783 (DAVLEDIPSLNPKFLG) lie on the Vacuolar side of the membrane. A helical transmembrane segment spans residues 784–804 (LTIFALIPNTTEFLNAISFAI). At 805 to 816 (HGNVALSMEIGS) the chain is on the cytoplasmic side. Residues 817–837 (AYALQVCLLQIPSLVIYSIFY) form a helical membrane-spanning segment. The Vacuolar portion of the chain corresponds to 838 to 851 (TWNVKKSMINIRTQ). The helical transmembrane segment at 852 to 872 (MFPLVFPRWDIFGAMTSVFMF) threads the bilayer. Topologically, residues 873–885 (TYLYAEGKSNYFK) are cytoplasmic. Residues 886 to 906 (GSMLILLYIIIVVGFYFQGAL) form a helical membrane-spanning segment. The Vacuolar segment spans residues 907–908 (SE).

Belongs to the Ca(2+):cation antiporter (CaCA) (TC 2.A.19) family.

It localises to the vacuole membrane. Has a role in promoting intracellular monovalent cation sequestration via the exchange of monovalent cations and especially Na(+) for hydrogen ions across the vacuolar membrane. This is Low affinity vacuolar monovalent cation/H(+) antiporter (VNX1) from Saccharomyces cerevisiae (strain ATCC 204508 / S288c) (Baker's yeast).